The following is a 217-amino-acid chain: Protein GrpE (217 aa).

The segment covering 1–10 (MSDHAEHAAD) has biased composition (basic and acidic residues). Residues 1-39 (MSDHAEHAADAADTDAPEGDDAGGDDGEQAGDDGTSALS) are disordered. The span at 12-31 (ADTDAPEGDDAGGDDGEQAG) shows a compositional bias: acidic residues.

This sequence belongs to the GrpE family. Homodimer.

It is found in the cytoplasm. Functionally, participates actively in the response to hyperosmotic and heat shock by preventing the aggregation of stress-denatured proteins, in association with DnaK and GrpE. It is the nucleotide exchange factor for DnaK and may function as a thermosensor. Unfolded proteins bind initially to DnaJ; upon interaction with the DnaJ-bound protein, DnaK hydrolyzes its bound ATP, resulting in the formation of a stable complex. GrpE releases ADP from DnaK; ATP binding to DnaK triggers the release of the substrate protein, thus completing the reaction cycle. Several rounds of ATP-dependent interactions between DnaJ, DnaK and GrpE are required for fully efficient folding. The protein is Protein GrpE of Halobacterium salinarum (strain ATCC 29341 / DSM 671 / R1).